Here is a 271-residue protein sequence, read N- to C-terminus: MKTIVLKLGGELVHAPELDVIARDLRVLVDGFNRVAIVHGGGPQASALQKTLGLETRMVAGRRYTDAQTLEVMKYVVAGQLNVDLCGRLLANGVMGVGLHGASGHVVQARRRPPRVMKGAGPEPVDLGLVGDVLGFNLPLLGDLFERRYVPVIACLGCDAQGQALNINGDTVASQLAGALEADALVLVTSTPGVLRDVNDPSSRIPHITHAEFERMVADGTISGGMIPKLEESFAVLDSGAKSVVIVGKLGEGDLAHAVLNPGSAGTVLVG.

Residues 41–42 (GG), Arg-63, and Asn-166 contribute to the substrate site.

The protein belongs to the acetylglutamate kinase family. ArgB subfamily.

It localises to the cytoplasm. The enzyme catalyses N-acetyl-L-glutamate + ATP = N-acetyl-L-glutamyl 5-phosphate + ADP. The protein operates within amino-acid biosynthesis; L-arginine biosynthesis; N(2)-acetyl-L-ornithine from L-glutamate: step 2/4. Functionally, catalyzes the ATP-dependent phosphorylation of N-acetyl-L-glutamate. The sequence is that of Acetylglutamate kinase from Anaeromyxobacter sp. (strain Fw109-5).